Reading from the N-terminus, the 76-residue chain is MARFFRRRKFCRFTAEDVKEIDFKDLNTLKAYVSETGKIVPSRITGTKARYQRQLATAIKRARFLALLPYTDSHGR.

Belongs to the bacterial ribosomal protein bS18 family. In terms of assembly, part of the 30S ribosomal subunit. Forms a tight heterodimer with protein bS6.

In terms of biological role, binds as a heterodimer with protein bS6 to the central domain of the 16S rRNA, where it helps stabilize the platform of the 30S subunit. This chain is Small ribosomal subunit protein bS18, found in Pseudomonas entomophila (strain L48).